The following is a 97-amino-acid chain: MSRISADDVRKVAKLARLDLPEEKIATYTGQLESILEYVGQLESIDTEGVPETTRAVEVTNVTREDGVTPTPVREDILNQAPQREGDFFRVPKILAD.

It belongs to the GatC family. As to quaternary structure, heterotrimer of A, B and C subunits.

It carries out the reaction L-glutamyl-tRNA(Gln) + L-glutamine + ATP + H2O = L-glutaminyl-tRNA(Gln) + L-glutamate + ADP + phosphate + H(+). The catalysed reaction is L-aspartyl-tRNA(Asn) + L-glutamine + ATP + H2O = L-asparaginyl-tRNA(Asn) + L-glutamate + ADP + phosphate + 2 H(+). Allows the formation of correctly charged Asn-tRNA(Asn) or Gln-tRNA(Gln) through the transamidation of misacylated Asp-tRNA(Asn) or Glu-tRNA(Gln) in organisms which lack either or both of asparaginyl-tRNA or glutaminyl-tRNA synthetases. The reaction takes place in the presence of glutamine and ATP through an activated phospho-Asp-tRNA(Asn) or phospho-Glu-tRNA(Gln). The sequence is that of Aspartyl/glutamyl-tRNA(Asn/Gln) amidotransferase subunit C from Parasynechococcus marenigrum (strain WH8102).